Here is a 121-residue protein sequence, read N- to C-terminus: Auxin-responsive protein SAUR32 (121 aa).

Belongs to the ARG7 family. As to expression, expressed in roots, leaves and stems.

The protein localises to the nucleus. The protein resides in the cytoplasm. Its function is as follows. May play a role in the apical hook development. This chain is Auxin-responsive protein SAUR32, found in Arabidopsis thaliana (Mouse-ear cress).